The following is a 336-amino-acid chain: Fructose-1,6-bisphosphatase class 1 (336 aa).

Positions 92, 115, 117, and 118 each coordinate Mg(2+). Substrate is bound by residues Asp-118 to Ser-121, Asn-211, Tyr-244, Tyr-262 to Tyr-264, and Lys-274. Residue Glu-280 coordinates Mg(2+).

Belongs to the FBPase class 1 family. Homotetramer. Mg(2+) is required as a cofactor.

The protein resides in the cytoplasm. The enzyme catalyses beta-D-fructose 1,6-bisphosphate + H2O = beta-D-fructose 6-phosphate + phosphate. The protein operates within carbohydrate biosynthesis; gluconeogenesis. The protein is Fructose-1,6-bisphosphatase class 1 of Vibrio atlanticus (strain LGP32) (Vibrio splendidus (strain Mel32)).